The primary structure comprises 917 residues: Protein translocase subunit SecA (917 aa).

ATP-binding positions include glutamine 87, 105–109 (GEGKT), and aspartate 516. 4 residues coordinate Zn(2+): cysteine 901, cysteine 903, cysteine 912, and histidine 913.

It belongs to the SecA family. As to quaternary structure, monomer and homodimer. Part of the essential Sec protein translocation apparatus which comprises SecA, SecYEG and auxiliary proteins SecDF-YajC and YidC. Zn(2+) serves as cofactor.

It is found in the cell inner membrane. Its subcellular location is the cytoplasm. It carries out the reaction ATP + H2O + cellular proteinSide 1 = ADP + phosphate + cellular proteinSide 2.. In terms of biological role, part of the Sec protein translocase complex. Interacts with the SecYEG preprotein conducting channel. Has a central role in coupling the hydrolysis of ATP to the transfer of proteins into and across the cell membrane, serving both as a receptor for the preprotein-SecB complex and as an ATP-driven molecular motor driving the stepwise translocation of polypeptide chains across the membrane. This is Protein translocase subunit SecA from Verminephrobacter eiseniae (strain EF01-2).